The chain runs to 324 residues: MLWKKRKVLYFAGISVFILILLLLKLNSKPKANVWPTSSKIVIYNRIPKTGSTTFTNAIAYDLYKENGFSVLHVNMTKNRQVMSLPDQYTFVNNITTWTERLPAFYHGHVAFIDFQRFGIANPIYINIIREPLERLLSHYYFLRYGDNYRIGLKRSRAGNNETFDECYSRGGKDCDMKQMWIQIPYFCGHYHFCTEVGNPEALRVAKQNVLEKYLLVGTTSRMRDMIALLEVTVPDFFKGALGHFDSLDANRAHLRYTKKKIPPNDQTLSMIRRDEVYKMEREFYDFINNLFDAVFKKATNGISKADDLVKLPLQYHFEKIKPS.

Over 1–6 (MLWKKR) the chain is Cytoplasmic. Residues 7–24 (KVLYFAGISVFILILLLL) traverse the membrane as a helical; Signal-anchor for type II membrane protein segment. The Lumenal segment spans residues 25 to 324 (KLNSKPKANV…QYHFEKIKPS (300 aa)). N-linked (GlcNAc...) asparagine glycosylation is found at asparagine 75 and asparagine 94. Catalysis depends on residues histidine 107 and histidine 109. N-linked (GlcNAc...) asparagine glycosylation occurs at asparagine 161. 2 cysteine pairs are disulfide-bonded: cysteine 167–cysteine 175 and cysteine 188–cysteine 194.

This sequence belongs to the sulfotransferase 3 family. Homotrimer. Present in the hypodermis, muscle, distal tip cells (DTCs) and in neurons (at protein level).

It localises to the golgi apparatus membrane. Catalyzes the transfer of sulfate to the C2-position of selected hexuronic acid residues within the maturing heparan sulfate (HS). Involved in cell adhesion and guidance by specifically modifying proteoglycans in the extracellular matrix and on the cell surface that are essential for axon migrations. The protein is Heparan sulfate 2-O-sulfotransferase hst-2 of Caenorhabditis elegans.